The chain runs to 284 residues: Bifunctional protein FolD 2 (284 aa).

Residues 166-168 and isoleucine 232 contribute to the NADP(+) site; that span reads GAS.

Belongs to the tetrahydrofolate dehydrogenase/cyclohydrolase family. In terms of assembly, homodimer.

It carries out the reaction (6R)-5,10-methylene-5,6,7,8-tetrahydrofolate + NADP(+) = (6R)-5,10-methenyltetrahydrofolate + NADPH. It catalyses the reaction (6R)-5,10-methenyltetrahydrofolate + H2O = (6R)-10-formyltetrahydrofolate + H(+). The protein operates within one-carbon metabolism; tetrahydrofolate interconversion. Catalyzes the oxidation of 5,10-methylenetetrahydrofolate to 5,10-methenyltetrahydrofolate and then the hydrolysis of 5,10-methenyltetrahydrofolate to 10-formyltetrahydrofolate. This is Bifunctional protein FolD 2 from Pseudomonas putida (strain ATCC 47054 / DSM 6125 / CFBP 8728 / NCIMB 11950 / KT2440).